Consider the following 180-residue polypeptide: Peptide deformylase (180 aa).

Cys88 and His130 together coordinate Fe cation. Glu131 is a catalytic residue. His134 is a binding site for Fe cation.

It belongs to the polypeptide deformylase family. It depends on Fe(2+) as a cofactor.

The enzyme catalyses N-terminal N-formyl-L-methionyl-[peptide] + H2O = N-terminal L-methionyl-[peptide] + formate. Its function is as follows. Removes the formyl group from the N-terminal Met of newly synthesized proteins. Requires at least a dipeptide for an efficient rate of reaction. N-terminal L-methionine is a prerequisite for activity but the enzyme has broad specificity at other positions. The polypeptide is Peptide deformylase (Acidothermus cellulolyticus (strain ATCC 43068 / DSM 8971 / 11B)).